We begin with the raw amino-acid sequence, 449 residues long: tRNA-2-methylthio-N(6)-dimethylallyladenosine synthase (449 aa).

The 116-residue stretch at 4–119 folds into the MTTase N-terminal domain; it reads RTFHIETFGC…APQALDRLVE (116 aa). Residues cysteine 13, cysteine 48, cysteine 82, cysteine 158, cysteine 162, and cysteine 165 each contribute to the [4Fe-4S] cluster site. The Radical SAM core domain occupies 144–375; sequence GAVPASVFVN…QTLQNRLTER (232 aa). A TRAM domain is found at 378-446; the sequence is QDMVGRKVEV…KHSLLAEQAG (69 aa).

It belongs to the methylthiotransferase family. MiaB subfamily. In terms of assembly, monomer. The cofactor is [4Fe-4S] cluster.

Its subcellular location is the cytoplasm. The enzyme catalyses N(6)-dimethylallyladenosine(37) in tRNA + (sulfur carrier)-SH + AH2 + 2 S-adenosyl-L-methionine = 2-methylsulfanyl-N(6)-dimethylallyladenosine(37) in tRNA + (sulfur carrier)-H + 5'-deoxyadenosine + L-methionine + A + S-adenosyl-L-homocysteine + 2 H(+). Catalyzes the methylthiolation of N6-(dimethylallyl)adenosine (i(6)A), leading to the formation of 2-methylthio-N6-(dimethylallyl)adenosine (ms(2)i(6)A) at position 37 in tRNAs that read codons beginning with uridine. This Nitratidesulfovibrio vulgaris (strain ATCC 29579 / DSM 644 / CCUG 34227 / NCIMB 8303 / VKM B-1760 / Hildenborough) (Desulfovibrio vulgaris) protein is tRNA-2-methylthio-N(6)-dimethylallyladenosine synthase.